Reading from the N-terminus, the 302-residue chain is Sulfate adenylyltransferase subunit 2 (302 aa).

It belongs to the PAPS reductase family. CysD subfamily. Heterodimer composed of CysD, the smaller subunit, and CysN.

The catalysed reaction is sulfate + ATP + H(+) = adenosine 5'-phosphosulfate + diphosphate. Its pathway is sulfur metabolism; hydrogen sulfide biosynthesis; sulfite from sulfate: step 1/3. Functionally, with CysN forms the ATP sulfurylase (ATPS) that catalyzes the adenylation of sulfate producing adenosine 5'-phosphosulfate (APS) and diphosphate, the first enzymatic step in sulfur assimilation pathway. APS synthesis involves the formation of a high-energy phosphoric-sulfuric acid anhydride bond driven by GTP hydrolysis by CysN coupled to ATP hydrolysis by CysD. This chain is Sulfate adenylyltransferase subunit 2, found in Escherichia coli O157:H7 (strain EC4115 / EHEC).